Here is a 307-residue protein sequence, read N- to C-terminus: tRNA dimethylallyltransferase (307 aa).

9 to 16 (GPTAVGKT) contacts ATP. 11–16 (TAVGKT) provides a ligand contact to substrate. The segment at 34–37 (DSMQ) is interaction with substrate tRNA.

This sequence belongs to the IPP transferase family. In terms of assembly, monomer. Mg(2+) serves as cofactor.

It carries out the reaction adenosine(37) in tRNA + dimethylallyl diphosphate = N(6)-dimethylallyladenosine(37) in tRNA + diphosphate. Functionally, catalyzes the transfer of a dimethylallyl group onto the adenine at position 37 in tRNAs that read codons beginning with uridine, leading to the formation of N6-(dimethylallyl)adenosine (i(6)A). This is tRNA dimethylallyltransferase from Limosilactobacillus reuteri (strain DSM 20016) (Lactobacillus reuteri).